The chain runs to 237 residues: Heme oxygenase (237 aa).

Residue His-17 participates in heme b binding.

This sequence belongs to the heme oxygenase family.

The protein resides in the plastid. It localises to the chloroplast. The catalysed reaction is heme b + 3 reduced [NADPH--hemoprotein reductase] + 3 O2 = biliverdin IXalpha + CO + Fe(2+) + 3 oxidized [NADPH--hemoprotein reductase] + 3 H2O + H(+). Catalyzes the opening of the heme ring with the release of iron. Key enzyme in the synthesis of the chromophoric part of the photosynthetic antennae. This Guillardia theta (Cryptophyte) protein is Heme oxygenase (pbsA).